We begin with the raw amino-acid sequence, 2110 residues long: Tenascin (2110 aa).

The first 22 residues, 1-22 (MGAVTWLLPGIFLALFALTPEG), serve as a signal peptide directing secretion. The N-linked (GlcNAc...) asparagine glycan is linked to Asn38. 3 positions are modified to phosphoserine: Ser65, Ser70, and Ser72. The disordered stretch occupies residues 69 to 91 (ESASGEKDLTPTPESSGSFQEHT). An O-linked (Xyl...) (chondroitin sulfate) serine glycan is attached at Ser72. Residues 80 to 89 (TPESSGSFQE) are compositionally biased toward polar residues. Positions 118–142 (DVKELLSRLEELELLVSSLREQCTM) form a coiled coil. Residues Asn166 and Asn184 are each glycosylated (N-linked (GlcNAc...) asparagine). In terms of domain architecture, EGF-like 1; incomplete spans 174 to 185 (CVCEPGWKGPNC). 14 EGF-like domains span residues 186 to 216 (SEPD…GEDC), 217 to 247 (SQLA…GPDC), 248 to 279 (GLEV…GEDC), 280 to 310 (NEPL…GEDC), 311 to 341 (SELI…GEDC), 342 to 372 (GELT…GADC), 373 to 403 (SEKR…GADC), 404 to 434 (GDLQ…GEDC), 435 to 465 (SQRR…GFDC), 466 to 496 (SEMS…GEDC), 497 to 527 (RDRR…GPDC), 528 to 558 (AELS…GKDC), 559 to 589 (KEQR…GLDC), and 590 to 621 (GQRS…IDCS). Intrachain disulfides connect Cys190/Cys200, Cys194/Cys205, Cys207/Cys216, Cys221/Cys231, Cys225/Cys236, Cys238/Cys247, Cys252/Cys263, Cys256/Cys268, Cys270/Cys279, Cys284/Cys294, Cys288/Cys299, Cys301/Cys310, Cys315/Cys325, Cys319/Cys330, Cys332/Cys341, Cys346/Cys356, Cys350/Cys361, Cys363/Cys372, Cys377/Cys387, Cys381/Cys392, Cys394/Cys403, Cys408/Cys418, Cys412/Cys423, Cys425/Cys434, Cys439/Cys449, Cys443/Cys454, Cys456/Cys465, Cys470/Cys480, Cys474/Cys485, Cys487/Cys496, Cys501/Cys511, Cys505/Cys516, Cys518/Cys527, Cys532/Cys542, Cys536/Cys547, Cys549/Cys558, Cys563/Cys573, Cys567/Cys578, Cys580/Cys589, Cys594/Cys604, Cys598/Cys609, and Cys611/Cys620. N-linked (GlcNAc...) asparagine glycosylation is present at Asn327. 14 consecutive Fibronectin type-III domains span residues 625–715 (PPKD…LPAP), 716–804 (EGLK…TRLD), 805–894 (APSH…TGLD), 895–988 (APRN…IDAP), 989–1077 (KDLR…VPSL), 1078–1165 (ENLT…TGTT), 1167–1259 (NLGE…LPQL), 1260–1348 (GGLS…AREP), 1349–1440 (EIGN…ALPL), 1442–1530 (ENLT…EAEP), 1531–1620 (EVDN…TAMG), 1621–1710 (SPKE…ALDG), 1711–1797 (PSGL…TDLD), and 1798–1886 (SPRE…IGLL). A glycan (N-linked (GlcNAc...) asparagine) is linked at Asn788. At Thr905 the chain carries Phosphothreonine. 12 N-linked (GlcNAc...) asparagine glycosylation sites follow: Asn1018, Asn1079, Asn1093, Asn1119, Asn1184, Asn1210, Asn1275, Asn1301, Asn1354, Asn1364, Asn1394, and Asn1443. A glycan (N-linked (GlcNAc...) asparagine) is linked at Asn1718. One can recognise a Fibrinogen C-terminal domain in the interval 1884–2099 (GLLYPFPRDC…FAEMKLRPSN (216 aa)). N-linked (GlcNAc...) asparagine glycosylation is found at Asn1969 and Asn2071.

The protein belongs to the tenascin family. As to quaternary structure, homohexamer; disulfide-linked. A homotrimer may be formed in the triple coiled-coil region and may be stabilized by disulfide rings at both ends. Two of such half-hexabrachions may be disulfide linked within the central globule. Interacts with CSPG4. Interacts (via the 3rd fibronectin type-III domain) with integrin ITGA9:ITGB1. Post-translationally, N-glycosylated. Expressed in the corneal limbus, the periosteum and the rib molecular layer of the cerebellum, the matrix of kidney tubules, blood vessels, stomach and intestine (at protein level). In terms of tissue distribution, weakly expressed in the brain. As to expression, highly expressed in the thymus and moderately expressed in the brain.

It is found in the secreted. Its subcellular location is the extracellular space. The protein resides in the extracellular matrix. Functionally, extracellular matrix protein implicated in guidance of migrating neurons as well as axons during development, synaptic plasticity as well as neuronal regeneration. Promotes neurite outgrowth when provided to neurons in culture. May play a role in supporting the growth of epithelial tumors. Ligand for integrins ITGA8:ITGB1, ITGA9:ITGB1, ITGAV:ITGB3 and ITGAV:ITGB6. In tumors, stimulates angiogenesis by elongation, migration and sprouting of endothelial cells. The chain is Tenascin from Mus musculus (Mouse).